The primary structure comprises 157 residues: Large ribosomal subunit protein bL20 (157 aa).

Positions 121 to 157 (TSAPAVSAEAAPKAKAAKKPAAKKAAAKKPVAEEAAK) are disordered. Over residues 122–134 (SAPAVSAEAAPKA) the composition is skewed to low complexity. The span at 135–147 (KAAKKPAAKKAAA) shows a compositional bias: basic residues.

It belongs to the bacterial ribosomal protein bL20 family.

In terms of biological role, binds directly to 23S ribosomal RNA and is necessary for the in vitro assembly process of the 50S ribosomal subunit. It is not involved in the protein synthesizing functions of that subunit. The sequence is that of Large ribosomal subunit protein bL20 (rplT) from Arthrobacter sp. (strain FB24).